We begin with the raw amino-acid sequence, 373 residues long: Mannan endo-1,4-beta-mannosidase A (373 aa).

An N-terminal signal peptide occupies residues 1–17 (MKGLFAFGLGLLSLVNA). Residues tryptophan 81, asparagine 193, and 194-196 (EPR) each bind substrate. The Proton donor/acceptor role is filled by glutamate 194. A disulfide bond links cysteine 197 and cysteine 200. 3 residues coordinate substrate: glutamate 230, tyrosine 267, and tryptophan 271. Cysteine 289 and cysteine 296 form a disulfide bridge. The active-site Nucleophile is the glutamate 300. Residues cysteine 308 and cysteine 359 are joined by a disulfide bond. Tryptophan 332 is a binding site for substrate.

It belongs to the glycosyl hydrolase 5 (cellulase A) family. Monomer. In terms of processing, not glycosylated.

It localises to the secreted. It carries out the reaction Random hydrolysis of (1-&gt;4)-beta-D-mannosidic linkages in mannans, galactomannans and glucomannans.. Functionally, endo-1,4-mannanase that catalyzes the random hydrolysis of (1-&gt;4)-beta-D-mannosidic linkages in mannans and heteromannans. It is a crucial enzyme for depolymerization of seed galactomannans and wood galactoglucomannans. Hydrolyzes structurally different mannan polysaccharides, such as galactomannans, glucomannans, and beta-1,4-mannans from different sources, yielding principally mannobiose. Also has transglycosylation activity. The chain is Mannan endo-1,4-beta-mannosidase A from Podospora anserina (strain S / ATCC MYA-4624 / DSM 980 / FGSC 10383) (Pleurage anserina).